The primary structure comprises 218 residues: Small ribosomal subunit protein uS3 (218 aa).

The KH type-2 domain maps to 38 to 106; that stretch reads IREYISKRLQ…RVHINIVEIK (69 aa).

Belongs to the universal ribosomal protein uS3 family. Part of the 30S ribosomal subunit. Forms a tight complex with proteins S10 and S14.

Binds the lower part of the 30S subunit head. Binds mRNA in the 70S ribosome, positioning it for translation. The sequence is that of Small ribosomal subunit protein uS3 from Geobacillus kaustophilus (strain HTA426).